Consider the following 199-residue polypeptide: dITP/XTP pyrophosphatase (199 aa).

Residue 8 to 13 (SGNAGK) participates in substrate binding. Asp69 acts as the Proton acceptor in catalysis. Asp69 is a Mg(2+) binding site. Residues Ser70, 154–157 (FGYN), Lys177, and 182–183 (HR) contribute to the substrate site.

The protein belongs to the HAM1 NTPase family. Homodimer. Requires Mg(2+) as cofactor.

The enzyme catalyses XTP + H2O = XMP + diphosphate + H(+). It carries out the reaction dITP + H2O = dIMP + diphosphate + H(+). It catalyses the reaction ITP + H2O = IMP + diphosphate + H(+). Pyrophosphatase that catalyzes the hydrolysis of nucleoside triphosphates to their monophosphate derivatives, with a high preference for the non-canonical purine nucleotides XTP (xanthosine triphosphate), dITP (deoxyinosine triphosphate) and ITP. Seems to function as a house-cleaning enzyme that removes non-canonical purine nucleotides from the nucleotide pool, thus preventing their incorporation into DNA/RNA and avoiding chromosomal lesions. In Xanthomonas oryzae pv. oryzae (strain KACC10331 / KXO85), this protein is dITP/XTP pyrophosphatase.